The primary structure comprises 131 residues: D-ribose pyranase (131 aa).

The active-site Proton donor is the histidine 20. Substrate is bound by residues aspartate 28, histidine 98, and 120–122 (YAN).

Belongs to the RbsD / FucU family. RbsD subfamily. As to quaternary structure, homodecamer.

It is found in the cytoplasm. The catalysed reaction is beta-D-ribopyranose = beta-D-ribofuranose. It participates in carbohydrate metabolism; D-ribose degradation; D-ribose 5-phosphate from beta-D-ribopyranose: step 1/2. Its function is as follows. Catalyzes the interconversion of beta-pyran and beta-furan forms of D-ribose. The sequence is that of D-ribose pyranase from Bacillus cereus (strain ZK / E33L).